The following is a 353-amino-acid chain: Holliday junction branch migration complex subunit RuvB (353 aa).

Positions 1–183 are large ATPase domain (RuvB-L); the sequence is MSGEGLVSAA…FGFTAHMDFY (183 aa). ATP-binding positions include leucine 22, arginine 23, glycine 64, lysine 67, threonine 68, serine 69, 130 to 132, arginine 173, tyrosine 183, and arginine 220; that span reads EDF. Threonine 68 contacts Mg(2+). Residues 184 to 254 are small ATPAse domain (RuvB-S); it reads DAAELALVLT…VARAALRIYD (71 aa). The interval 257–353 is head domain (RuvB-H); that stretch reads ALGLDRLDRA…ALFGEDLPAS (97 aa). DNA-binding residues include arginine 312 and arginine 317.

The protein belongs to the RuvB family. Homohexamer. Forms an RuvA(8)-RuvB(12)-Holliday junction (HJ) complex. HJ DNA is sandwiched between 2 RuvA tetramers; dsDNA enters through RuvA and exits via RuvB. An RuvB hexamer assembles on each DNA strand where it exits the tetramer. Each RuvB hexamer is contacted by two RuvA subunits (via domain III) on 2 adjacent RuvB subunits; this complex drives branch migration. In the full resolvosome a probable DNA-RuvA(4)-RuvB(12)-RuvC(2) complex forms which resolves the HJ.

The protein localises to the cytoplasm. The enzyme catalyses ATP + H2O = ADP + phosphate + H(+). Functionally, the RuvA-RuvB-RuvC complex processes Holliday junction (HJ) DNA during genetic recombination and DNA repair, while the RuvA-RuvB complex plays an important role in the rescue of blocked DNA replication forks via replication fork reversal (RFR). RuvA specifically binds to HJ cruciform DNA, conferring on it an open structure. The RuvB hexamer acts as an ATP-dependent pump, pulling dsDNA into and through the RuvAB complex. RuvB forms 2 homohexamers on either side of HJ DNA bound by 1 or 2 RuvA tetramers; 4 subunits per hexamer contact DNA at a time. Coordinated motions by a converter formed by DNA-disengaged RuvB subunits stimulates ATP hydrolysis and nucleotide exchange. Immobilization of the converter enables RuvB to convert the ATP-contained energy into a lever motion, pulling 2 nucleotides of DNA out of the RuvA tetramer per ATP hydrolyzed, thus driving DNA branch migration. The RuvB motors rotate together with the DNA substrate, which together with the progressing nucleotide cycle form the mechanistic basis for DNA recombination by continuous HJ branch migration. Branch migration allows RuvC to scan DNA until it finds its consensus sequence, where it cleaves and resolves cruciform DNA. The protein is Holliday junction branch migration complex subunit RuvB of Parafrankia sp. (strain EAN1pec).